A 270-amino-acid chain; its full sequence is NAD kinase (270 aa).

D63 acts as the Proton acceptor in catalysis. Residues 63–64, R68, 131–132, K142, R159, D161, 172–177, A196, and Q230 contribute to the NAD(+) site; these read DG, NE, and TAYAMS.

Belongs to the NAD kinase family. Requires a divalent metal cation as cofactor.

Its subcellular location is the cytoplasm. It catalyses the reaction NAD(+) + ATP = ADP + NADP(+) + H(+). Functionally, involved in the regulation of the intracellular balance of NAD and NADP, and is a key enzyme in the biosynthesis of NADP. Catalyzes specifically the phosphorylation on 2'-hydroxyl of the adenosine moiety of NAD to yield NADP. The sequence is that of NAD kinase from Methanoregula boonei (strain DSM 21154 / JCM 14090 / 6A8).